A 540-amino-acid polypeptide reads, in one-letter code: Cytokinin dehydrogenase 5 (540 aa).

The N-terminal stretch at 1-22 (MNREMTSSFLLLTFAICKLIIA) is a signal peptide. The FAD-binding PCMH-type domain occupies 63-241 (SPEEPLAVLH…TRARISLEPA (179 aa)). FAD contacts are provided by alanine 97, glycine 99, and glycine 101. Position 102 is a pros-8alpha-FAD histidine (histidine 102). Positions 103, 107, 165, 170, 176, 180, and 231 each coordinate FAD. 2 N-linked (GlcNAc...) asparagine glycosylation sites follow: asparagine 310 and asparagine 406. FAD is bound by residues tyrosine 479 and glutamine 517.

It belongs to the oxygen-dependent FAD-linked oxidoreductase family. Requires FAD as cofactor. Expressed in the developing leaf petioles and in the rib zone of the axillary shoot meristems. In roots, expressed in the vascular cylinder within the root apical meristem and only faintly detectable in the differentiated root.

It localises to the secreted. It is found in the extracellular space. The enzyme catalyses N(6)-dimethylallyladenine + A + H2O = 3-methyl-2-butenal + adenine + AH2. Catalyzes the oxidation of cytokinins, a family of N(6)-substituted adenine derivatives that are plant hormones, where the substituent is an isopentenyl group. In association with CKX3 regulates the activity of the reproductive meristems, flower organ size and ovule formation. The sequence is that of Cytokinin dehydrogenase 5 (CKX5) from Arabidopsis thaliana (Mouse-ear cress).